Consider the following 301-residue polypeptide: MADQLIRATAADGGIRAVGVITTRLTEEARQRHKLSYVATAALGRTMAAGLLMASSMKRAGSRVNVRVKGDGPLAGILVDAGLDGTVRGYVGNPHIELPPNARGKLDVGGAVGNGYLYVVRDIGYGYPYSSTVELVSGEIGDDVAHYLVTSEQTPSALMLGVFVGAGGVTAAGGLLVQVLPKAARDEALVAKLESRVGALSGFTPLLQAGKTLPEIFHDLLGDMGLTIFPESQILRFHCGCSFDRVLGALKMLGEAELQDMIVKDDGAEATCDFCGRVYQASSEHLTQLIVDLQTESSVSG.

Intrachain disulfides connect Cys-239–Cys-241 and Cys-272–Cys-275.

Belongs to the HSP33 family. In terms of processing, under oxidizing conditions two disulfide bonds are formed involving the reactive cysteines. Under reducing conditions zinc is bound to the reactive cysteines and the protein is inactive.

It localises to the cytoplasm. Functionally, redox regulated molecular chaperone. Protects both thermally unfolding and oxidatively damaged proteins from irreversible aggregation. Plays an important role in the bacterial defense system toward oxidative stress. This Trichormus variabilis (strain ATCC 29413 / PCC 7937) (Anabaena variabilis) protein is 33 kDa chaperonin.